The following is a 169-amino-acid chain: MPQSPIPTTEVIIAADCWQDQPDAEDVIHRAILAAAERVDAEVGDAEIAVMLTDDAGIRTLNSNWRGIDKPTNVLSFPALQPTGPRGDDDAPRMLGDIAIAYETMRREADEEQKPFDHHLSHLTVHGFLHLIGYDHESDAEAEEMEALETEILAHLGVPDPYADRERLD.

Zn(2+) is bound by residues His126, His130, and His136.

It belongs to the endoribonuclease YbeY family. The cofactor is Zn(2+).

Its subcellular location is the cytoplasm. In terms of biological role, single strand-specific metallo-endoribonuclease involved in late-stage 70S ribosome quality control and in maturation of the 3' terminus of the 16S rRNA. The polypeptide is Endoribonuclease YbeY (Bradyrhizobium sp. (strain BTAi1 / ATCC BAA-1182)).